Consider the following 160-residue polypeptide: 6,7-dimethyl-8-ribityllumazine synthase (160 aa).

Residues Phe-23, 61 to 63, and 85 to 87 each bind 5-amino-6-(D-ribitylamino)uracil; these read SFE and AVI. (2S)-2-hydroxy-3-oxobutyl phosphate is bound at residue 90–91; it reads DT. Residue His-93 is the Proton donor of the active site. Phe-118 serves as a coordination point for 5-amino-6-(D-ribitylamino)uracil. (2S)-2-hydroxy-3-oxobutyl phosphate is bound at residue Arg-132.

Belongs to the DMRL synthase family.

The enzyme catalyses (2S)-2-hydroxy-3-oxobutyl phosphate + 5-amino-6-(D-ribitylamino)uracil = 6,7-dimethyl-8-(1-D-ribityl)lumazine + phosphate + 2 H2O + H(+). It participates in cofactor biosynthesis; riboflavin biosynthesis; riboflavin from 2-hydroxy-3-oxobutyl phosphate and 5-amino-6-(D-ribitylamino)uracil: step 1/2. Its function is as follows. Catalyzes the formation of 6,7-dimethyl-8-ribityllumazine by condensation of 5-amino-6-(D-ribitylamino)uracil with 3,4-dihydroxy-2-butanone 4-phosphate. This is the penultimate step in the biosynthesis of riboflavin. The chain is 6,7-dimethyl-8-ribityllumazine synthase from Synechococcus sp. (strain CC9311).